Reading from the N-terminus, the 507-residue chain is Rho GTPase-activating protein 19 (507 aa).

Residues 112-305 form the Rho-GAP domain; sequence APLTEEGIAQ…FMIKHSQKLF (194 aa). 3 disordered regions span residues 344–371, 400–419, and 483–507; these read FLKH…QQHT, KNTP…KKHV, and DLQI…ETSI. Over residues 355–369 the composition is skewed to low complexity; sequence SSPSSSTSLQEQTQQ. Polar residues predominate over residues 400 to 413; that stretch reads KNTPRTPVSDTQVP. Over residues 483-492 the composition is skewed to basic and acidic residues; that stretch reads DLQIRKEASS.

Functionally, GTPase activator for the Rho-type GTPases by converting them to an inactive GDP-bound state. This Xenopus laevis (African clawed frog) protein is Rho GTPase-activating protein 19 (arhgap19).